The primary structure comprises 274 residues: Aspartate/glutamate leucyltransferase (274 aa).

This sequence belongs to the R-transferase family. Bpt subfamily.

It localises to the cytoplasm. It catalyses the reaction N-terminal L-glutamyl-[protein] + L-leucyl-tRNA(Leu) = N-terminal L-leucyl-L-glutamyl-[protein] + tRNA(Leu) + H(+). The catalysed reaction is N-terminal L-aspartyl-[protein] + L-leucyl-tRNA(Leu) = N-terminal L-leucyl-L-aspartyl-[protein] + tRNA(Leu) + H(+). Functionally, functions in the N-end rule pathway of protein degradation where it conjugates Leu from its aminoacyl-tRNA to the N-termini of proteins containing an N-terminal aspartate or glutamate. In Ruegeria sp. (strain TM1040) (Silicibacter sp.), this protein is Aspartate/glutamate leucyltransferase.